We begin with the raw amino-acid sequence, 602 residues long: MHKYRTHNCNALQISDVGKEVKLSGWVHRRRDHGNLVFIDLRDHYGITQIVFTDQNLQLMEMASRLRYESVITVIGKVVARSGDTINDTLTTGHIEILAREFIVESAADTLPFVINTEKDAPEDLRLKHRFLDLRREKLHNNIILRSQIISHIRHLMTARGFTEFQTPILTASSPEGARDFLVPSRMHSGKFYALPQAPQQFKQLLMVSGFDRYFQIAPCFRDEDARADRSPGEFYQLDVEMSFVTQEDVFSTIEPVMYDLFTKFTDKKVSETPFIRIPYNESMLKYGSDKPDLRNPIIIADVTEIFRDSDFTIFRENIKKGSVVRAIPAPKAAAHARSFFDKMIEFAISEGAGGLGYIQFSKNDKAKGPVAKFLSPQQLESLKATVNISDGDAVFFVSDKKEKAAKLAGKVRIRISDELDLLEKDCFKFCWITDFPFYELNEETAKIDFSHNPFSMPQGGLDALKNAKTTAELLELTAYQYDIVCNGIELSSGAIRNHKPEIMYKAFSIAGYSEEEVNKRFGSMIRAFKFGAPPHGGIAPGIDRIVMLLAEATNIREIIAFPLNQQAEDLLMNAPNYVEDKALKELGIMLLPSARKNVEQE.

Position 176 (Glu176) interacts with L-aspartate. Residues 200–203 are aspartate; sequence QQFK. 2 residues coordinate L-aspartate: Arg222 and His452. 222 to 224 is an ATP binding site; that stretch reads RDE. Glu490 contributes to the ATP binding site. Arg497 serves as a coordination point for L-aspartate. 542-545 serves as a coordination point for ATP; it reads GIDR.

This sequence belongs to the class-II aminoacyl-tRNA synthetase family. Type 1 subfamily. As to quaternary structure, homodimer.

The protein localises to the cytoplasm. It carries out the reaction tRNA(Asx) + L-aspartate + ATP = L-aspartyl-tRNA(Asx) + AMP + diphosphate. Aspartyl-tRNA synthetase with relaxed tRNA specificity since it is able to aspartylate not only its cognate tRNA(Asp) but also tRNA(Asn). Reaction proceeds in two steps: L-aspartate is first activated by ATP to form Asp-AMP and then transferred to the acceptor end of tRNA(Asp/Asn). The protein is Aspartate--tRNA(Asp/Asn) ligase of Rickettsia canadensis (strain McKiel).